Here is a 609-residue protein sequence, read N- to C-terminus: mRNA-decapping enzyme 1B (609 aa).

A2 is modified (N-acetylalanine). S147 bears the Phosphoserine mark. Position 191 is a phosphotyrosine (Y191). Disordered stretches follow at residues 201–222 and 243–264; these read PVKPSENQQQRIPQPNQTLDPE and TVEPPQTLHQQQQQQQEKLPIR. Positions 205-219 are enriched in polar residues; sequence SENQQQRIPQPNQTL. Phosphoserine occurs at positions 272 and 333. 2 disordered regions span residues 326-345 and 359-438; these read TGPVRPGSPHNIGTSRGVQN and TPGA…SSGV. Polar residues predominate over residues 336–345; it reads NIGTSRGVQN. The segment covering 368 to 378 has biased composition (low complexity); that stretch reads PSTPAPASSAA. Residue T389 is modified to Phosphothreonine. A compositionally biased stretch (polar residues) spans 418–438; the sequence is QSTLPRQTLPISGNQTGSSGV. A phosphoserine mark is found at S440 and S503.

The protein belongs to the DCP1 family. In terms of assembly, interacts with DCP1A.

It localises to the cytoplasm. The protein resides in the nucleus. It carries out the reaction a 5'-end (N(7)-methyl 5'-triphosphoguanosine)-ribonucleoside in mRNA + H2O = N(7)-methyl-GDP + a 5'-end phospho-ribonucleoside in mRNA + 2 H(+). In terms of biological role, may play a role in the degradation of mRNAs, both in normal mRNA turnover and in nonsense-mediated mRNA decay. May remove the 7-methyl guanine cap structure from mRNA molecules, yielding a 5'-phosphorylated mRNA fragment and 7m-GDP. In Pongo abelii (Sumatran orangutan), this protein is mRNA-decapping enzyme 1B (DCP1B).